We begin with the raw amino-acid sequence, 388 residues long: Succinate--CoA ligase [ADP-forming] subunit beta (388 aa).

The ATP-grasp domain occupies 9 to 244; it reads KQLFARYGLP…QSQEDPREAQ (236 aa). Residues Lys-46, 53–55, Glu-99, Thr-102, and Glu-107 contribute to the ATP site; that span reads GRG. The Mg(2+) site is built by Asn-199 and Asp-213. Substrate-binding positions include Asn-264 and 321–323; that span reads GIV.

It belongs to the succinate/malate CoA ligase beta subunit family. In terms of assembly, heterotetramer of two alpha and two beta subunits. Mg(2+) serves as cofactor.

The enzyme catalyses succinate + ATP + CoA = succinyl-CoA + ADP + phosphate. The catalysed reaction is GTP + succinate + CoA = succinyl-CoA + GDP + phosphate. The protein operates within carbohydrate metabolism; tricarboxylic acid cycle; succinate from succinyl-CoA (ligase route): step 1/1. Its function is as follows. Succinyl-CoA synthetase functions in the citric acid cycle (TCA), coupling the hydrolysis of succinyl-CoA to the synthesis of either ATP or GTP and thus represents the only step of substrate-level phosphorylation in the TCA. The beta subunit provides nucleotide specificity of the enzyme and binds the substrate succinate, while the binding sites for coenzyme A and phosphate are found in the alpha subunit. The sequence is that of Succinate--CoA ligase [ADP-forming] subunit beta from Shigella boydii serotype 18 (strain CDC 3083-94 / BS512).